Consider the following 382-residue polypeptide: Dual-specificity RNA methyltransferase RlmN (382 aa).

The Proton acceptor role is filled by Glu96. The Radical SAM core domain occupies Gln102–Asp342. A disulfide bridge links Cys109 with Cys345. Residues Cys116, Cys120, and Cys123 each contribute to the [4Fe-4S] cluster site. S-adenosyl-L-methionine-binding positions include Gly170–Glu171, Ser202, Ser224–His226, and Asn302. The S-methylcysteine intermediate role is filled by Cys345.

The protein belongs to the radical SAM superfamily. RlmN family. Requires [4Fe-4S] cluster as cofactor.

Its subcellular location is the cytoplasm. It catalyses the reaction adenosine(2503) in 23S rRNA + 2 reduced [2Fe-2S]-[ferredoxin] + 2 S-adenosyl-L-methionine = 2-methyladenosine(2503) in 23S rRNA + 5'-deoxyadenosine + L-methionine + 2 oxidized [2Fe-2S]-[ferredoxin] + S-adenosyl-L-homocysteine. The catalysed reaction is adenosine(37) in tRNA + 2 reduced [2Fe-2S]-[ferredoxin] + 2 S-adenosyl-L-methionine = 2-methyladenosine(37) in tRNA + 5'-deoxyadenosine + L-methionine + 2 oxidized [2Fe-2S]-[ferredoxin] + S-adenosyl-L-homocysteine. Its function is as follows. Specifically methylates position 2 of adenine 2503 in 23S rRNA and position 2 of adenine 37 in tRNAs. m2A2503 modification seems to play a crucial role in the proofreading step occurring at the peptidyl transferase center and thus would serve to optimize ribosomal fidelity. The polypeptide is Dual-specificity RNA methyltransferase RlmN (Pseudomonas fluorescens (strain SBW25)).